Here is a 395-residue protein sequence, read N- to C-terminus: F-box/kelch-repeat protein SKIP25 (395 aa).

Residues 1–29 are disordered; it reads MEKKLKRRESMSTTAAESPPAKRRRTVTG. One can recognise an F-box domain in the interval 34-79; it reads ALIEGLPDHISEICLSLVHRPSLLSAVCTRWRRLLYSPEFPSFPSL. 5 Kelch repeats span residues 81–129, 147–194, 196–245, 246–299, and 301–342; these read ALFV…YRHP, LILI…ACDG, IYIA…FSRE, AIDA…AMEE, and ILYS…TQVT.

Part of a SCF (ASK-cullin-F-box) protein ligase complex. Interacts with SKP1A/ASK1.

Its subcellular location is the nucleus. The protein operates within protein modification; protein ubiquitination. In terms of biological role, component of SCF(ASK-cullin-F-box) E3 ubiquitin ligase complexes, which may mediate the ubiquitination and subsequent proteasomal degradation of target proteins. This is F-box/kelch-repeat protein SKIP25 (SKIP25) from Arabidopsis thaliana (Mouse-ear cress).